We begin with the raw amino-acid sequence, 363 residues long: 2,5-diketocamphane 1,2-monooxygenase 1 (363 aa).

Residues Met74 and Thr186–Ser194 each bind FMN.

The protein belongs to the bacterial luciferase oxidoreductase family. As to quaternary structure, homodimer. Likely forms a loose transient complex with a P.putida flavin reductase that provides the required FMNH(2) to the enzyme.

The enzyme catalyses (1R,4R)-bornane-2,5-dione + FMNH2 + O2 = (1R,4R)-5-oxo-1,2-campholide + FMN + H2O + H(+). The protein operates within terpene metabolism; (R)-camphor degradation. Its function is as follows. Involved in the degradation and assimilation of (+)-camphor, which allows P.putida strain NCIMB 10007 to grow on this enantiomer of camphor as the sole carbon source. Catalyzes the FMNH(2)-dependent lactonization of 2,5-diketocamphane via a Baeyer-Villiger oxidation to produce the unstable lactone 5-oxo-1,2-campholide with (R,R) configuration, that presumably undergoes spontaneous hydrolysis to form 2-oxo-Delta(3)-4,5,5-trimethylcyclopentenylacetate. Is also able to convert (+)-camphor and norcamphor to the corresponding lactone in vitro. Shows no conversion of (-)-camphor, (+)-fenchone, (-)-fenchone, and (+)-nopinone. Acts only on bicyclic ketones; is not active towards monocyclic ketones, aromatic ketones, the aliphatic 2-decanone, 1-indanone and progesterone. This Pseudomonas putida (Arthrobacter siderocapsulatus) protein is 2,5-diketocamphane 1,2-monooxygenase 1.